Here is a 450-residue protein sequence, read N- to C-terminus: tRNA modification GTPase MnmE (450 aa).

Lysine 21, glutamate 78, and lysine 117 together coordinate (6S)-5-formyl-5,6,7,8-tetrahydrofolate. Residues 213–376 (GHALSIVGKP…LSQKISAFFP (164 aa)) enclose the TrmE-type G domain. Residue asparagine 223 coordinates K(+). GTP is bound by residues 223–228 (NAGKSS), 242–248 (SDIKGTT), and 267–270 (DTAG). A Mg(2+)-binding site is contributed by serine 227. 3 residues coordinate K(+): serine 242, isoleucine 244, and threonine 247. Mg(2+) is bound at residue threonine 248. Lysine 450 is a binding site for (6S)-5-formyl-5,6,7,8-tetrahydrofolate.

The protein belongs to the TRAFAC class TrmE-Era-EngA-EngB-Septin-like GTPase superfamily. TrmE GTPase family. As to quaternary structure, homodimer. Heterotetramer of two MnmE and two MnmG subunits. K(+) serves as cofactor.

The protein resides in the cytoplasm. Exhibits a very high intrinsic GTPase hydrolysis rate. Involved in the addition of a carboxymethylaminomethyl (cmnm) group at the wobble position (U34) of certain tRNAs, forming tRNA-cmnm(5)s(2)U34. The polypeptide is tRNA modification GTPase MnmE (Helicobacter pylori (strain Shi470)).